We begin with the raw amino-acid sequence, 385 residues long: Aryl-alcohol dehydrogenase [NADP(+)] (385 aa).

Tyrosine 76 (proton donor) is an active-site residue. An NADP(+)-binding site is contributed by 238-248 (NVLCAGKIRTD).

It belongs to the aldo/keto reductase family. Aldo/keto reductase 2 subfamily. The N-terminus is blocked.

It carries out the reaction an aromatic primary alcohol + NADP(+) = an aromatic aldehyde + NADPH + H(+). In Phanerodontia chrysosporium (White-rot fungus), this protein is Aryl-alcohol dehydrogenase [NADP(+)].